A 240-amino-acid chain; its full sequence is MSTSLVSKPLASKAVVVFSGGQDSTTCLIQALTQYDEVHGITFDYGQRHREEIEVAKSLAKRLKITSHKVMDVTLLNELAISALTRDAIPVSHELMENGLPNTFVPGRNILFLTLAGIYAYQLGAEAIITGVCETDFSGYPDCRNDFVKAMESALVQGMDKQLKIITPLMWLNKAQTWALADKYQQLDLVRHHTLTCYNGVIGDGCGDCPACHLRKRGLDEYMQDKTAVMASLDASEPKA.

18–28 (FSGGQDSTTCL) contacts ATP. Positions 197, 206, 209, and 212 each coordinate Zn(2+).

The protein belongs to the QueC family. It depends on Zn(2+) as a cofactor.

It catalyses the reaction 7-carboxy-7-deazaguanine + NH4(+) + ATP = 7-cyano-7-deazaguanine + ADP + phosphate + H2O + H(+). Its pathway is purine metabolism; 7-cyano-7-deazaguanine biosynthesis. Its function is as follows. Catalyzes the ATP-dependent conversion of 7-carboxy-7-deazaguanine (CDG) to 7-cyano-7-deazaguanine (preQ(0)). The chain is 7-cyano-7-deazaguanine synthase from Shewanella baltica (strain OS223).